A 644-amino-acid polypeptide reads, in one-letter code: DNA gyrase subunit B (644 aa).

The region spanning 429–543 is the Toprim domain; sequence CEIFLVEGDS…AGYVYIAQPP (115 aa). Mg(2+) contacts are provided by Glu-435, Asp-508, and Asp-510.

It belongs to the type II topoisomerase GyrB family. As to quaternary structure, heterotetramer, composed of two GyrA and two GyrB chains. In the heterotetramer, GyrA contains the active site tyrosine that forms a transient covalent intermediate with DNA, while GyrB binds cofactors and catalyzes ATP hydrolysis. Requires Mg(2+) as cofactor. Mn(2+) serves as cofactor. Ca(2+) is required as a cofactor.

The protein localises to the cytoplasm. The catalysed reaction is ATP-dependent breakage, passage and rejoining of double-stranded DNA.. Functionally, a type II topoisomerase that negatively supercoils closed circular double-stranded (ds) DNA in an ATP-dependent manner to modulate DNA topology and maintain chromosomes in an underwound state. Negative supercoiling favors strand separation, and DNA replication, transcription, recombination and repair, all of which involve strand separation. Also able to catalyze the interconversion of other topological isomers of dsDNA rings, including catenanes and knotted rings. Type II topoisomerases break and join 2 DNA strands simultaneously in an ATP-dependent manner. The chain is DNA gyrase subunit B from Staphylococcus aureus (strain USA300).